The sequence spans 235 residues: Secretory carrier-associated membrane protein 5A (235 aa).

Residues 1–39 (MSDKPNNFPPLPRFIPLKPCFYQDFDTDIPDLHRTTAKR) lie on the Cytoplasmic side of the membrane. The chain crosses the membrane as a helical span at residues 40–60 (LYYLWMLNSITLGVNLIGCLA). Topologically, residues 61 to 67 (WLIGGGS) are extracellular. Residues 68 to 88 (ATNFGLAFLWLILFTPCSYVC) form a helical membrane-spanning segment. At 89-102 (WFRPIYKAFKTDSS) the chain is on the cytoplasmic side. A helical transmembrane segment spans residues 103 to 125 (FNFMAFFFTFTAQLVISIIQAVG). The Extracellular portion of the chain corresponds to 126–148 (IPGWGVCGWIASISFFGTNVGSA). Residues 149–169 (VVMLIPTIMFTAVAVLSFVAL) form a helical membrane-spanning segment. The Cytoplasmic segment spans residues 170–235 (TKVHRFYRGA…TPNYGYSNEM (66 aa)).

It belongs to the SCAMP family. SCAMP5 subfamily.

It localises to the cell membrane. The protein localises to the golgi apparatus membrane. The protein resides in the golgi apparatus. Its subcellular location is the trans-Golgi network membrane. It is found in the recycling endosome membrane. It localises to the cytoplasmic vesicle. The protein localises to the secretory vesicle. The protein resides in the synaptic vesicle membrane. Required for the calcium-dependent exocytosis of signal sequence-containing cytokines. Probably acts in cooperation with the SNARE machinery. The sequence is that of Secretory carrier-associated membrane protein 5A (scamp5-a) from Xenopus laevis (African clawed frog).